A 376-amino-acid polypeptide reads, in one-letter code: Multiphosphoryl transfer protein (376 aa).

Positions 2 to 142 constitute a PTS EIIA type-2 domain; that stretch reads FQLSVQDIHP…EELRALLMGE (141 aa). H62 functions as the Tele-phosphohistidine intermediate; for EIIA activity in the catalytic mechanism. H62 carries the phosphohistidine; by HPr modification. Residues 156–284 form a m domain region; the sequence is TLDVIASSLV…LTSDDALTDD (129 aa). One can recognise an HPr domain in the interval 285–375; that stretch reads VLSAEFVVRN…DAIAAGLGEG (91 aa). H299 functions as the Pros-phosphohistidine intermediate; for HPr activity in the catalytic mechanism. At H299 the chain carries Phosphohistidine; by EI.

It is found in the cytoplasm. Functionally, the phosphoenolpyruvate-dependent sugar phosphotransferase system (sugar PTS), a major carbohydrate active transport system, catalyzes the phosphorylation of incoming sugar substrates concomitantly with their translocation across the cell membrane. The enzyme II FruAB PTS system is involved in fructose transport. The polypeptide is Multiphosphoryl transfer protein (fruB) (Salmonella typhi).